Here is a 200-residue protein sequence, read N- to C-terminus: Ras-related protein RABF2a (200 aa).

Residue 17–25 (GDVGAGKSS) coordinates GTP. The short motif at 39–47 (QESTIGAAF) is the Effector region element. GTP is bound by residues 65-69 (DTAGQ), 123-126 (NKAD), and 153-154 (SA). 2 S-geranylgeranyl cysteine lipidation sites follow: Cys-198 and Cys-199.

Belongs to the small GTPase superfamily. Rab family. Interacts with VPS9A. Interacts with EREX (via PX domain). Binds to VPS3. In terms of tissue distribution, high in stem, root, and inflorescence.

The protein resides in the endosome membrane. It is found in the prevacuolar compartment membrane. In terms of biological role, involved in the trafficking of soluble cargo proteins from the prevacuolar compartment to the central vacuole. Involved in vacuolar transport of storage proteins with EREX as effector. Regulates membrane trafficking to protein storage vacuoles (PSVs). The chain is Ras-related protein RABF2a (RABF2A) from Arabidopsis thaliana (Mouse-ear cress).